We begin with the raw amino-acid sequence, 113 residues long: Nucleoid-associated protein Csac_1593 (113 aa).

This sequence belongs to the YbaB/EbfC family. As to quaternary structure, homodimer.

It is found in the cytoplasm. The protein resides in the nucleoid. Binds to DNA and alters its conformation. May be involved in regulation of gene expression, nucleoid organization and DNA protection. This is Nucleoid-associated protein Csac_1593 from Caldicellulosiruptor saccharolyticus (strain ATCC 43494 / DSM 8903 / Tp8T 6331).